The chain runs to 405 residues: Arginine biosynthesis bifunctional protein ArgJ (405 aa).

Substrate contacts are provided by threonine 152, lysine 178, threonine 189, glutamate 276, asparagine 400, and serine 405. Threonine 189 functions as the Nucleophile in the catalytic mechanism.

Belongs to the ArgJ family. As to quaternary structure, heterotetramer of two alpha and two beta chains.

The protein resides in the cytoplasm. The catalysed reaction is N(2)-acetyl-L-ornithine + L-glutamate = N-acetyl-L-glutamate + L-ornithine. It catalyses the reaction L-glutamate + acetyl-CoA = N-acetyl-L-glutamate + CoA + H(+). It participates in amino-acid biosynthesis; L-arginine biosynthesis; L-ornithine and N-acetyl-L-glutamate from L-glutamate and N(2)-acetyl-L-ornithine (cyclic): step 1/1. Its pathway is amino-acid biosynthesis; L-arginine biosynthesis; N(2)-acetyl-L-ornithine from L-glutamate: step 1/4. Functionally, catalyzes two activities which are involved in the cyclic version of arginine biosynthesis: the synthesis of N-acetylglutamate from glutamate and acetyl-CoA as the acetyl donor, and of ornithine by transacetylation between N(2)-acetylornithine and glutamate. This is Arginine biosynthesis bifunctional protein ArgJ from Chromobacterium violaceum (strain ATCC 12472 / DSM 30191 / JCM 1249 / CCUG 213 / NBRC 12614 / NCIMB 9131 / NCTC 9757 / MK).